We begin with the raw amino-acid sequence, 539 residues long: Putative serine/threonine-protein kinase L670 (539 aa).

Positions 1 to 115 constitute a Cyclin N-terminal domain; that stretch reads MSLFNNHPEL…ILKVFKFGLH (115 aa). Residues 258 to 519 form the Protein kinase domain; sequence MNVIEKLGIG…VLKIFSECFV (262 aa). ATP is bound by residues 264–272 and Lys-285; that span reads LGIGSFGLV. The Proton acceptor role is filled by Asp-375.

This sequence belongs to the protein kinase superfamily. Ser/Thr protein kinase family.

It catalyses the reaction L-seryl-[protein] + ATP = O-phospho-L-seryl-[protein] + ADP + H(+). It carries out the reaction L-threonyl-[protein] + ATP = O-phospho-L-threonyl-[protein] + ADP + H(+). In Acanthamoeba polyphaga mimivirus (APMV), this protein is Putative serine/threonine-protein kinase L670.